We begin with the raw amino-acid sequence, 86 residues long: Small ribosomal subunit protein uS17 (86 aa).

It belongs to the universal ribosomal protein uS17 family. As to quaternary structure, part of the 30S ribosomal subunit.

Functionally, one of the primary rRNA binding proteins, it binds specifically to the 5'-end of 16S ribosomal RNA. In Streptococcus equi subsp. equi (strain 4047), this protein is Small ribosomal subunit protein uS17.